Consider the following 512-residue polypeptide: Histidine ammonia-lyase (512 aa).

Positions 142 to 144 (ASG) form a cross-link, 5-imidazolinone (Ala-Gly). At Ser-143 the chain carries 2,3-didehydroalanine (Ser).

This sequence belongs to the PAL/histidase family. In terms of processing, contains an active site 4-methylidene-imidazol-5-one (MIO), which is formed autocatalytically by cyclization and dehydration of residues Ala-Ser-Gly.

The protein localises to the cytoplasm. The catalysed reaction is L-histidine = trans-urocanate + NH4(+). It participates in amino-acid degradation; L-histidine degradation into L-glutamate; N-formimidoyl-L-glutamate from L-histidine: step 1/3. The chain is Histidine ammonia-lyase from Allorhizobium ampelinum (strain ATCC BAA-846 / DSM 112012 / S4) (Agrobacterium vitis (strain S4)).